Here is a 313-residue protein sequence, read N- to C-terminus: Putative zinc finger protein 077L (313 aa).

Residues 174-199 (CFSITKGIECPHYSCTYIHNYSQIEH) form a C3H1-type zinc finger. Positions 294-313 (SDDSDSENNDEDDDWKIDLF) are disordered. A compositionally biased stretch (acidic residues) spans 296-313 (DSDSENNDEDDDWKIDLF).

Belongs to the IIV-6 077L family.

This chain is Putative zinc finger protein 077L, found in Invertebrate iridescent virus 6 (IIV-6).